Here is a 348-residue protein sequence, read N- to C-terminus: Dihydroorotate dehydrogenase (quinone) (348 aa).

Residues 60–64 (AGFDK) and Thr84 contribute to the FMN site. Lys64 contributes to the substrate binding site. 109-113 (NRLGF) contacts substrate. 2 residues coordinate FMN: Asn138 and Asn169. Substrate is bound at residue Asn169. Residue Ser172 is the Nucleophile of the active site. Substrate is bound at residue Asn174. Lys207 and Ser235 together coordinate FMN. A substrate-binding site is contributed by 236 to 237 (NT). FMN-binding positions include Gly258, Gly287, and 308 to 309 (YS).

It belongs to the dihydroorotate dehydrogenase family. Type 2 subfamily. In terms of assembly, monomer. It depends on FMN as a cofactor.

The protein resides in the cell membrane. The enzyme catalyses (S)-dihydroorotate + a quinone = orotate + a quinol. The protein operates within pyrimidine metabolism; UMP biosynthesis via de novo pathway; orotate from (S)-dihydroorotate (quinone route): step 1/1. In terms of biological role, catalyzes the conversion of dihydroorotate to orotate with quinone as electron acceptor. The sequence is that of Dihydroorotate dehydrogenase (quinone) from Parvibaculum lavamentivorans (strain DS-1 / DSM 13023 / NCIMB 13966).